Consider the following 221-residue polypeptide: MALPNQQTVDYPSFKLVIVGDGGTGKTTFVKRHLTGEFEKKYEPTIGVEVHPLDFFTNCGKIRFYCWDTAGQEKFGGLRDGYYIHGQCAIIMFDVTSRLTYKNVPTWHRDLCRVCENIPIVLCGNKVDVKNRQVKAKQVTFHRKKNLQYYEVSAKSNYNFEKPFLYLARKLAGDGNLHFVETPALAPPDVTIDLAAQQQHEAELAAAAAQPLPDDDDDLIE.

One can recognise a Small GTPase Ran-type domain in the interval D10–D174. Position 21 to 28 (D21 to T28) interacts with GTP. The tract at residues K40–V48 is switch-I. GTP is bound by residues G71, N125–D128, and S153–K155. Positions G71–Q87 are switch-II.

It belongs to the small GTPase superfamily. Ran family. As to quaternary structure, found in a nuclear export complex with RanGTP, exportin and pre-miRNA.

The protein localises to the nucleus. GTP-binding protein involved in nucleocytoplasmic transport. Required for the import of protein into the nucleus and also for RNA export. Involved in chromatin condensation and control of cell cycle. This Oryza sativa subsp. indica (Rice) protein is GTP-binding nuclear protein Ran-1 (RAN1).